The following is a 476-amino-acid chain: ATP synthase subunit beta, mitochondrial (476 aa).

156-163 lines the ATP pocket; it reads GAGVGKTV.

In terms of assembly, F-type ATP synthases have 2 components, the catalytic core F(1) and the membrane-embedded component F(0), linked together by a central stalk and a peripheral stalk. The central stalk, also called rotor shaft, is often seen as part of F(1). The peripheral stalk is seen as part of F(0). F(0) contains the membrane channel next to the rotor. F-type ATP synthases form dimers but each monomer functions independently in ATP generation. The dimer consists of 18 different polypeptides: ATP1 (subunit alpha, part of F(1), 3 molecules per monomer), ATP2 (subunit beta, part of F(1), 3 molecules per monomer), ATP3 (subunit gamma, part of the central stalk), ATP4 (subunit b, part of the peripheral stalk), ATP5/OSCP (subunit 5/OSCP, part of the peripheral stalk), ATP6 (subunit a, part of the peripheral stalk), ATP7 (subunit d, part of the peripheral stalk), ATP8 (subunit 8, part of the peripheral stalk), OLI1 (subunit c, part of the rotor, 10 molecules per monomer), ATP14 (subunit h, part of the peripheral stalk), ATP15 (subunit epsilon, part of the central stalk), ATP16 (subunit delta, part of the central stalk), ATP17 (subunit f, part of the peripheral stalk), ATP18 (subunit i/j, part of the peripheral stalk). Dimer-specific subunits are ATP19 (subunit k, at interface between monomers), ATP20 (subunit g, at interface between monomers), TIM11 (subunit e, at interface between monomers). Also contains subunit L.

Its subcellular location is the mitochondrion inner membrane. It catalyses the reaction ATP + H2O + 4 H(+)(in) = ADP + phosphate + 5 H(+)(out). Functionally, mitochondrial membrane ATP synthase (F(1)F(0) ATP synthase or Complex V) produces ATP from ADP in the presence of a proton gradient across the membrane which is generated by electron transport complexes of the respiratory chain. F-type ATP synthases consist of two structural domains, F(1) - containing the extramembraneous catalytic core, and F(0) - containing the membrane proton channel, linked together by a central stalk and a peripheral stalk. During catalysis, ATP synthesis in the catalytic domain of F(1) is coupled via a rotary mechanism of the central stalk subunits to proton translocation. Subunits alpha/ATP1 and beta/ATP2 form the catalytic core in F(1). Rotation of the central stalk against the surrounding alpha/ATP1(3)beta/ATP2(3) subunits leads to hydrolysis of ATP in three separate catalytic sites on the beta/ATP2 subunits. The chain is ATP synthase subunit beta, mitochondrial from Pichia angusta (Yeast).